The following is a 478-amino-acid chain: Dihydrolipoyl dehydrogenase (478 aa).

FAD contacts are provided by residues 36 to 45 (ERYSTLGGVC), Lys54, and Ala117. Cys45 and Cys50 are disulfide-bonded. NAD(+)-binding positions include 183–187 (GGGII), Glu206, Val239, and 270–273 (AIGR). Residues Asp313 and Ala321 each coordinate FAD. His445 serves as the catalytic Proton acceptor.

The protein belongs to the class-I pyridine nucleotide-disulfide oxidoreductase family. As to quaternary structure, homodimer. Requires FAD as cofactor.

Its subcellular location is the cytoplasm. It carries out the reaction N(6)-[(R)-dihydrolipoyl]-L-lysyl-[protein] + NAD(+) = N(6)-[(R)-lipoyl]-L-lysyl-[protein] + NADH + H(+). Functionally, lipoamide dehydrogenase is a component of the alpha-ketoacid dehydrogenase complexes. The sequence is that of Dihydrolipoyl dehydrogenase (lpdA) from Haemophilus influenzae (strain ATCC 51907 / DSM 11121 / KW20 / Rd).